We begin with the raw amino-acid sequence, 293 residues long: Ribosomal protein L11 methyltransferase (293 aa).

S-adenosyl-L-methionine-binding residues include threonine 145, glycine 166, aspartate 188, and asparagine 230.

It belongs to the methyltransferase superfamily. PrmA family.

It localises to the cytoplasm. It carries out the reaction L-lysyl-[protein] + 3 S-adenosyl-L-methionine = N(6),N(6),N(6)-trimethyl-L-lysyl-[protein] + 3 S-adenosyl-L-homocysteine + 3 H(+). Its function is as follows. Methylates ribosomal protein L11. This Salmonella arizonae (strain ATCC BAA-731 / CDC346-86 / RSK2980) protein is Ribosomal protein L11 methyltransferase.